Consider the following 186-residue polypeptide: Peptidyl-tRNA hydrolase (186 aa).

Tyr13 lines the tRNA pocket. Residue His18 is the Proton acceptor of the active site. Residues Tyr59, Asn61, and Asn107 each contribute to the tRNA site.

The protein belongs to the PTH family. Monomer.

The protein resides in the cytoplasm. The enzyme catalyses an N-acyl-L-alpha-aminoacyl-tRNA + H2O = an N-acyl-L-amino acid + a tRNA + H(+). Functionally, hydrolyzes ribosome-free peptidyl-tRNAs (with 1 or more amino acids incorporated), which drop off the ribosome during protein synthesis, or as a result of ribosome stalling. Its function is as follows. Catalyzes the release of premature peptidyl moieties from peptidyl-tRNA molecules trapped in stalled 50S ribosomal subunits, and thus maintains levels of free tRNAs and 50S ribosomes. The chain is Peptidyl-tRNA hydrolase from Thermotoga petrophila (strain ATCC BAA-488 / DSM 13995 / JCM 10881 / RKU-1).